An 830-amino-acid chain; its full sequence is Interleukin-4 receptor subunit alpha (830 aa).

Positions 1–32 (MGWLCPGLTFSVSCLILVWAAGSGVTCVSPGG) are cleaved as a signal peptide. Topologically, residues 33-240 (VRVLEWPICL…NYYEEPLEQR (208 aa)) are extracellular. A disulfide bridge connects residues cysteine 41 and cysteine 51. N-linked (GlcNAc...) asparagine glycosylation is found at asparagine 60 and asparagine 78. A disulfide bond links cysteine 82 and cysteine 94. N-linked (GlcNAc...) asparagine glycosylation is found at asparagine 120, asparagine 142, and asparagine 170. Residues 133–232 (APRNLMVHAN…WSPSVKWLNY (100 aa)) enclose the Fibronectin type-III domain. Serine 172 carries the post-translational modification Phosphoserine. N-linked (GlcNAc...) asparagine glycans are attached at residues asparagine 184 and asparagine 217. A WSXWS motif motif is present at residues 220-224 (WSEWS). A helical transmembrane segment spans residues 241–264 (LPLGVSISCVVILIICLSCYFGII). Topologically, residues 265-830 (RIKKEWWDQI…SPGPACMDTS (566 aa)) are cytoplasmic. Residues 270 to 278 (WWDQIPNPA) carry the Box 1 motif motif. Over residues 378–387 (ENEEEEEEED) the composition is skewed to acidic residues. Disordered regions lie at residues 378-403 (ENEEEEEEEDKGSFCPSPENSGGSFQ) and 450-488 (MPWAEFPRVGSPEASSQGKEQPLNPEPSPQATPTQSLAS). A required for IRS1 activation and IL4-induced cell growth region spans residues 444–564 (ENASAPMPWA…ETWEQILRQS (121 aa)). Phosphotyrosine is present on tyrosine 504. Disordered regions lie at residues 508-610 (STFL…EAGY) and 623-696 (CPGT…DGQK). Residues 518–534 (GELDSDPELAEALEEVE) show a composition bias toward acidic residues. Positions 538–551 (PAAPQPSEPPPTLQ) are enriched in pro residues. The required for IL4-induced gene expression stretch occupies residues 564 to 662 (SVLQRRAAPA…VPTPLFTFGL (99 aa)). Residues 570-582 (AAPAPASGPSSSG) are compositionally biased toward low complexity. Tyrosine 583 and tyrosine 610 each carry phosphotyrosine. Over residues 623–635 (CPGTSGLEPSSGE) the composition is skewed to polar residues. Tyrosine 638 carries the post-translational modification Phosphotyrosine. 2 stretches are compositionally biased toward pro residues: residues 646–655 (PGCPETPVPT) and 665–676 (EPPPSPQNPPFP). The ITIM motif motif lies at 716–721 (IVYSAL). Residues 811–830 (SQTPTAVAMLSPGPACMDTS) form a disordered region.

Belongs to the type I cytokine receptor family. Type 4 subfamily. The functional IL4 receptor is formed by initial binding of IL4 to IL4R. Subsequent recruitment to the complex of the common gamma chain, in immune cells, creates a type I receptor and, in non-immune cells, of IL13RA1 forms a type II receptor. IL4R can also interact with the IL13/IL13RA1 complex to form a similar type II receptor. Interacts with PIK3C3. Interacts with the SH2-containing phosphatases, PTPN6/SHIP1, PTPN11/SHIP2 and INPP5D/SHIP. Interacts with JAK1 through a Box 1-containing region; inhibited by SOCS5. Interacts with SOCS5; inhibits IL4 signaling. Interacts with JAK3. Interacts with CLM1. Interacts with IL13RA2. Post-translationally, on IL4 binding, phosphorylated on C-terminal tyrosine residues.

The protein localises to the membrane. Receptor for both interleukin 4 and interleukin 13. Couples to the JAK1/2/3-STAT6 pathway. The IL4 response is involved in promoting Th2 differentiation. The IL4/IL13 responses are involved in regulating IgE production and, chemokine and mucus production at sites of allergic inflammation. In certain cell types, can signal through activation of insulin receptor substrates, IRS1/IRS2. The sequence is that of Interleukin-4 receptor subunit alpha (IL4R) from Sus scrofa (Pig).